The following is a 97-amino-acid chain: Aspartyl/glutamyl-tRNA(Asn/Gln) amidotransferase subunit C (97 aa).

This sequence belongs to the GatC family. Heterotrimer of A, B and C subunits.

The enzyme catalyses L-glutamyl-tRNA(Gln) + L-glutamine + ATP + H2O = L-glutaminyl-tRNA(Gln) + L-glutamate + ADP + phosphate + H(+). The catalysed reaction is L-aspartyl-tRNA(Asn) + L-glutamine + ATP + H2O = L-asparaginyl-tRNA(Asn) + L-glutamate + ADP + phosphate + 2 H(+). Its function is as follows. Allows the formation of correctly charged Asn-tRNA(Asn) or Gln-tRNA(Gln) through the transamidation of misacylated Asp-tRNA(Asn) or Glu-tRNA(Gln) in organisms which lack either or both of asparaginyl-tRNA or glutaminyl-tRNA synthetases. The reaction takes place in the presence of glutamine and ATP through an activated phospho-Asp-tRNA(Asn) or phospho-Glu-tRNA(Gln). The sequence is that of Aspartyl/glutamyl-tRNA(Asn/Gln) amidotransferase subunit C from Cyanothece sp. (strain PCC 7425 / ATCC 29141).